Consider the following 261-residue polypeptide: Glucosamine-6-phosphate deaminase (261 aa).

Asp67 functions as the Proton acceptor; for enolization step in the catalytic mechanism. Catalysis depends on Asp136, which acts as the For ring-opening step. His138 serves as the catalytic Proton acceptor; for ring-opening step. Residue Glu143 is the For ring-opening step of the active site.

The protein belongs to the glucosamine/galactosamine-6-phosphate isomerase family. NagB subfamily.

The enzyme catalyses alpha-D-glucosamine 6-phosphate + H2O = beta-D-fructose 6-phosphate + NH4(+). The protein operates within amino-sugar metabolism; N-acetylneuraminate degradation; D-fructose 6-phosphate from N-acetylneuraminate: step 5/5. Catalyzes the reversible isomerization-deamination of glucosamine 6-phosphate (GlcN6P) to form fructose 6-phosphate (Fru6P) and ammonium ion. This Mycolicibacterium smegmatis (strain ATCC 700084 / mc(2)155) (Mycobacterium smegmatis) protein is Glucosamine-6-phosphate deaminase.